A 197-amino-acid polypeptide reads, in one-letter code: Imidazoleglycerol-phosphate dehydratase (197 aa).

It belongs to the imidazoleglycerol-phosphate dehydratase family.

It is found in the cytoplasm. It catalyses the reaction D-erythro-1-(imidazol-4-yl)glycerol 3-phosphate = 3-(imidazol-4-yl)-2-oxopropyl phosphate + H2O. The protein operates within amino-acid biosynthesis; L-histidine biosynthesis; L-histidine from 5-phospho-alpha-D-ribose 1-diphosphate: step 6/9. This is Imidazoleglycerol-phosphate dehydratase from Chromobacterium violaceum (strain ATCC 12472 / DSM 30191 / JCM 1249 / CCUG 213 / NBRC 12614 / NCIMB 9131 / NCTC 9757 / MK).